A 145-amino-acid polypeptide reads, in one-letter code: Ribonuclease VapC24 (145 aa).

A PINc domain is found at Ile-4–Thr-123. Positions 5 and 106 each coordinate Mg(2+).

Belongs to the PINc/VapC protein family. Mg(2+) serves as cofactor.

Toxic component of a type II toxin-antitoxin (TA) system. An RNase. Its cognate antitoxin is VapB24. This is Ribonuclease VapC24 from Mycobacterium tuberculosis (strain CDC 1551 / Oshkosh).